The sequence spans 673 residues: Sodium/myo-inositol cotransporter 2 (673 aa).

The Extracellular segment spans residues 1–27; that stretch reads MESATISPQPPQSDSLEAFPQKSMEPA. The chain crosses the membrane as a helical span at residues 28–48; the sequence is DIAVLVLYFLFVLAVGLWSTV. Residues 49-65 lie on the Cytoplasmic side of the membrane; it reads RTKRDTVKGYFLAGGDM. The helical transmembrane segment at 66–88 threads the bilayer; sequence VWWPVGASLFASNVGSGHFIGLA. Residues 89–102 lie on the Extracellular side of the membrane; it reads GSGAAVGISVAAYE. Residues 103–123 traverse the membrane as a helical segment; it reads LNGLFSVLMLAWVFLPIYIAG. Over 124-148 the chain is Cytoplasmic; sequence QVTTMPEYLRRRFGGNRISITLAVL. A helical transmembrane segment spans residues 149 to 169; the sequence is YLFIYIFTKISVDMYAGAIFI. Residues 170-180 lie on the Extracellular side of the membrane; the sequence is QQSLHLDLYLA. Residues 181 to 201 traverse the membrane as a helical segment; that stretch reads IVGLLAITALYTVAGGLAAVI. The Cytoplasmic portion of the chain corresponds to 202–208; that stretch reads YTDALQT. A helical transmembrane segment spans residues 209–229; sequence VIMLIGAFILMGYSFAAVGGM. Topologically, residues 230–272 are extracellular; sequence EGLKDQYFLALASNRSENSSCGLPREDAFHIFRDPLTSDLPWP. Residues 273 to 293 traverse the membrane as a helical segment; the sequence is GILFGMSIPSLWYWCTDQVIV. Over 294 to 308 the chain is Cytoplasmic; that stretch reads QRSLAAKNLSHAKGG. Residues 309–329 traverse the membrane as a helical segment; it reads SLMAAYLKVLPLFLMVFPGMV. Topologically, residues 330-375 are extracellular; sequence SRVLFPDQVACAHPDICQRVCSNPSGCSDIAYPKLVLELLPTGLRG. A helical transmembrane segment spans residues 376–396; it reads LMMAVMVAALMSSLTSIFNSA. At 397–418 the chain is on the cytoplasmic side; sequence STIFTMDLWNHIRPRASERELM. The helical transmembrane segment at 419–439 threads the bilayer; sequence IVGRIFVFALVLVSILWIPIV. The Extracellular segment spans residues 440 to 446; it reads QASQGGQ. The helical transmembrane segment at 447-467 threads the bilayer; that stretch reads LFIYIQSISSYLQPPVAMVFI. Topologically, residues 468-479 are cytoplasmic; it reads MGCFWKRTNEKG. A helical membrane pass occupies residues 480–500; that stretch reads AFSGLILGLLLGLVRLILDFV. Residues 501 to 521 are Extracellular-facing; that stretch reads YAQPRCDQPDDRPAVVKDVHY. The helical transmembrane segment at 522-542 threads the bilayer; sequence LYFSMILSFTTLITVVTVSWF. Residues 543 to 652 lie on the Cytoplasmic side of the membrane; the sequence is TETPSKEMVS…SLEENPLVKT (110 aa). A helical transmembrane segment spans residues 653-673; the sequence is LLDVNCIVCISCAIFLWGYFA.

It belongs to the sodium:solute symporter (SSF) (TC 2.A.21) family.

The protein resides in the membrane. It localises to the apical cell membrane. It carries out the reaction myo-inositol(out) + 2 Na(+)(out) = myo-inositol(in) + 2 Na(+)(in). It catalyses the reaction 1D-chiro-inositol(out) + 2 Na(+)(out) = 1D-chiro-inositol(in) + 2 Na(+)(in). The enzyme catalyses D-glucose(out) + 2 Na(+)(out) = D-glucose(in) + 2 Na(+)(in). The catalysed reaction is D-xylose(out) + 2 Na(+)(out) = D-xylose(in) + 2 Na(+)(in). MI transport activity inhibited by D-chiro-inositol (DCI), phlorizin (Pz) and sodium (Na(+)). Insulin increases D-chiro-inositol uptake. Involved in the sodium-dependent cotransport of myo-inositol (MI) with a Na(+):MI stoichiometry of 2:1. Exclusively responsible for apical MI transport and absorption in intestine. Can also transport D-chiro-inositol (DCI) but not L-fucose. Exhibits stereospecific cotransport of both D-glucose and D-xylose. May induce apoptosis through the TNF-alpha, PDCD1 pathway. May play a role in the regulation of MI concentration in serum, involving reabsorption in at least the proximal tubule of the kidney. The protein is Sodium/myo-inositol cotransporter 2 of Mus musculus (Mouse).